The sequence spans 419 residues: Effector protein BipC (419 aa).

Disordered regions lie at residues 62–91 and 338–402; these read VAGSGAQRVELARPKPDAQTRATDRRTVSG and LQSG…AKSQ. Composition is skewed to basic and acidic residues over residues 71 to 91 and 380 to 392; these read ELARPKPDAQTRATDRRTVSG and TRDEAAHRSREAA.

Belongs to the SctB/SipC family.

It is found in the secreted. The sequence is that of Effector protein BipC (bipC) from Burkholderia pseudomallei (strain 1106a).